An 86-amino-acid chain; its full sequence is Large ribosomal subunit protein bL31B (86 aa).

It belongs to the bacterial ribosomal protein bL31 family. Type B subfamily. As to quaternary structure, part of the 50S ribosomal subunit.

In Salmonella arizonae (strain ATCC BAA-731 / CDC346-86 / RSK2980), this protein is Large ribosomal subunit protein bL31B.